The chain runs to 101 residues: MGARHLLALLLVLLVLGFEVQGAQVPQQDEAANTTLLTQVQESLLSYWDSTKAAAQDLYKKTYLTTMDEKIRDMFSKSTAAVSTYVGIFTDQLLSLLKGDE.

The N-terminal stretch at 1–22 (MGARHLLALLLVLLVLGFEVQG) is a signal peptide. Residues 66-74 (TMDEKIRDM) form a lipid binding region. Positions 78–101 (STAAVSTYVGIFTDQLLSLLKGDE) are lipoprotein lipase cofactor.

It belongs to the apolipoprotein C2 family. Post-translationally, proapolipoprotein C-II is synthesized as a sialic acid containing glycoprotein which is subsequently desialylated prior to its proteolytic processing. Proapolipoprotein C-II, the major form found in plasma undergoes proteolytic cleavage of its N-terminal hexapeptide to generate apolipoprotein C-II, which occurs as the minor form in plasma.

It localises to the secreted. In terms of biological role, component of chylomicrons, very low-density lipoproteins (VLDL), low-density lipoproteins (LDL), and high-density lipoproteins (HDL) in plasma. Plays an important role in lipoprotein metabolism as an activator of lipoprotein lipase. Both proapolipoprotein C-II and apolipoprotein C-II can activate lipoprotein lipase. This is Apolipoprotein C-II (APOC2) from Tapirus indicus (Asiatic tapir).